The primary structure comprises 598 residues: Elongation factor 4 (598 aa).

The region spanning 4–186 (DHIRNFSIIA…AIVKRVPPPK (183 aa)) is the tr-type G domain. GTP-binding positions include 16–21 (DHGKST) and 133–136 (NKID).

Belongs to the TRAFAC class translation factor GTPase superfamily. Classic translation factor GTPase family. LepA subfamily.

The protein resides in the cell inner membrane. The catalysed reaction is GTP + H2O = GDP + phosphate + H(+). Required for accurate and efficient protein synthesis under certain stress conditions. May act as a fidelity factor of the translation reaction, by catalyzing a one-codon backward translocation of tRNAs on improperly translocated ribosomes. Back-translocation proceeds from a post-translocation (POST) complex to a pre-translocation (PRE) complex, thus giving elongation factor G a second chance to translocate the tRNAs correctly. Binds to ribosomes in a GTP-dependent manner. The chain is Elongation factor 4 from Magnetococcus marinus (strain ATCC BAA-1437 / JCM 17883 / MC-1).